The sequence spans 36 residues: Beta/delta/mu-theraphotoxin-Pv1 (36 aa).

Intrachain disulfides connect Cys3–Cys17, Cys10–Cys22, and Cys16–Cys30. Phe36 carries the post-translational modification Phenylalanine amide.

It belongs to the neurotoxin 10 (Hwtx-1) family. In terms of tissue distribution, expressed by the venom gland.

It is found in the secreted. Functionally, gating-modifier toxin that targets voltage-gated sodium channels. Inhibits the inactivation of Nav1.7/SCN9A. The sequence is that of Beta/delta/mu-theraphotoxin-Pv1 from Poecilotheria vittata (Ghost ornamental tarantula).